The sequence spans 440 residues: Actin-like protein 7A (440 aa).

The disordered stretch occupies residues 1 to 29 (MSLDGVWAPQTANIGDGPAKKASDQASMQ). Positions 36–56 (ASLKDGPAKRAVWVRRDNAET) are required for interaction with TES.

This sequence belongs to the actin family. Interacts (via N-terminus) with TES (via LIM domain 2). Heterodimer with TES; the heterodimer interacts with ENAH to form a heterotrimer. Interacts with ACTL9. Interacts with CYLC1; the interaction may be relevant for proper acrosome attachment to the nuclear envelope. As to expression, detected in testis. Detected at the acrosome of round spermatids (at protein level). Detected in adult and embryonic testis. Detected in developing male germ cells.

It localises to the cytoplasm. It is found in the cytoskeleton. Its subcellular location is the golgi apparatus. The protein resides in the nucleus. The protein localises to the cytoplasmic vesicle. It localises to the secretory vesicle. It is found in the acrosome. Essential for normal spermatogenesis and male fertility. Required for normal sperm head morphology, acroplaxome formation, acrosome attachment, and acrosome granule stability. May anchor and stabilize acrosomal adherence to the acroplaxome at least in part by facilitating the presence of F-actin in the subacrosomal space. May play an important role in formation and fusion of Golgi-derived vesicles during acrosome biogenesis. The polypeptide is Actin-like protein 7A (Actl7a) (Mus musculus (Mouse)).